The chain runs to 385 residues: Zinc cluster transcription factor CZF1 (385 aa).

Residues 1-19 are compositionally biased toward polar residues; sequence MSSIPNINWNDPNNGKSNT. Disordered stretches follow at residues 1–117, 154–216, and 233–308; these read MSSI…QQPL, LQQR…QQWD, and SSIQ…KPIT. Low complexity predominate over residues 20 to 38; sequence SRQSQPQPQLPSNVSPPNS. 2 stretches are compositionally biased toward polar residues: residues 52–67 and 88–97; these read YGSSQFSNEYSRNPNT and YPVQQTAQQR. Composition is skewed to low complexity over residues 102–117 and 154–169; these read LQQVHSQQQQQQQQPL and LQQRQQAQGQQLKSQL. The span at 170–200 shows a compositional bias: polar residues; it reads NEQNAMMSASTQQYPVQDFTNPYPNAQNPAE. Low complexity-rich tracts occupy residues 201-214 and 233-256; these read QQQQQQPLRTQSQQ and SSIQQQIPPQNLSPSEQQQVKQQQ. A compositionally biased stretch (basic residues) spans 265 to 275; it reads KKKPGRKPKLR. The span at 279 to 291 shows a compositional bias: polar residues; it reads ESSSETPQVPKTA. Positions 315–342 form a DNA-binding region, zn(2)-C6 fungal-type; the sequence is CLTCRQRKKRCCETRPRCTECTRLRLNC. The segment at 345 to 364 is disordered; it reads PKPGTEHKNKPKDQKDDENT. The segment covering 348–364 has biased composition (basic and acidic residues); it reads GTEHKNKPKDQKDDENT.

As to quaternary structure, interacts with EFG1.

It localises to the nucleus. Transcriptional regulator of the switch between 2 heritable states, the white and opaque states. These 2 cell types differ in many characteristics, including cell structure, mating competence, and virulence. Each state is heritable for many generations, and switching between states occurs stochastically, at low frequency. Contributes to formation of the opaque state, but is not necessary for heritability of the opaque state. Plays a role in cell adhesion and pseudohyphal growth. Involved in acquisition of drug resistance and acts as a repressor of beta-glucan synthesis, thus negatively regulating cell wall integrity. Plays a role in adherence, invasion and damage to oral epithelial cells. In Candida albicans (strain SC5314 / ATCC MYA-2876) (Yeast), this protein is Zinc cluster transcription factor CZF1 (CZF1).